The primary structure comprises 462 residues: Violaxanthin de-epoxidase, chloroplastic (462 aa).

Residues Cys231 and Cys362 are joined by a disulfide bond. Residues 372–437 adopt a coiled-coil conformation; sequence IEKTVEEGER…RELSKEEMEF (66 aa). The tract at residues 380 to 391 is involved in the binding to the thylakoid membrane; it reads ERIIVKEVEEIE.

This sequence belongs to the calycin superfamily. Lipocalin family. In terms of assembly, interacts in vitro with LTO1.

Its subcellular location is the plastid. It localises to the chloroplast thylakoid membrane. The enzyme catalyses all-trans-violaxanthin + 2 L-ascorbate = all-trans-zeaxanthin + 2 L-dehydroascorbate + 2 H2O. Its activity is regulated as follows. Activity limited by low ascorbate availability. Feedback inhibition by zeaxanthin. Requires the presence of micelle-forming lipids such as monogalactosyldiacylglyceride (MGDG). Low concentration of bilayer forming lipids, such as digalactosyldiacylglyceride (DGDG) or phosphatidylcholine, supports a slower but nearly complete activity. 80% of the specific activity in lumenal chloroplast fractions is lost in vitro in the presence of reduced thioredoxin. Functionally, part of the xanthophyll (or violaxanthin) cycle for controlling the concentration of zeaxanthin in chloroplasts. Catalyzes the two-step mono de-epoxidation reaction. Stereospecific for all-trans xanthophylls. Zeaxanthin induces the dissipation of excitation energy in the chlorophyll of the light-harvesting protein complex of photosystem II. This is Violaxanthin de-epoxidase, chloroplastic from Arabidopsis thaliana (Mouse-ear cress).